The chain runs to 610 residues: Membrane protein insertase YidC (610 aa).

A helical transmembrane segment spans residues 7–27; that stretch reads FFITIALSILILALWQVFYLG. Positions 36 to 82 are disordered; sequence QARIEEQQRQAQQAAQNRQASSSTGDTPQMPANPDSIPGQGDTKAAG. Over residues 44–55 the composition is skewed to low complexity; that stretch reads RQAQQAAQNRQA. Helical transmembrane passes span 358-378, 387-407, 458-478, 510-530, and 546-566; these read FDLLIDWGWFYFITKPMFYLI, NFGVAILVVTVLLKALFFPLA, WPVLVQIPVFFALYKVLYVTI, TVPHFLMIGVWPIIMGIIMFL, and IFTWMPIIFTFMLASFPAGLV.

Belongs to the OXA1/ALB3/YidC family. Type 1 subfamily. In terms of assembly, interacts with the Sec translocase complex via SecD. Specifically interacts with transmembrane segments of nascent integral membrane proteins during membrane integration.

It localises to the cell inner membrane. In terms of biological role, required for the insertion and/or proper folding and/or complex formation of integral membrane proteins into the membrane. Involved in integration of membrane proteins that insert both dependently and independently of the Sec translocase complex, as well as at least some lipoproteins. Aids folding of multispanning membrane proteins. This is Membrane protein insertase YidC from Brucella melitensis biotype 1 (strain ATCC 23456 / CCUG 17765 / NCTC 10094 / 16M).